The chain runs to 1460 residues: MSDKEDEKQSQPVLKDDKQDQTEEPAIDDNVNGDEGPSDEEEGDDVFDSSEEDEDLDNDEEEAQKVREGFIVDDDEEGGEEDEVVKKKSRRKRRAREEENEALDEDDLDLLMENAGFKRPSASEAAKQRSGKLKRLKRVGDDEEESASAEPESEVARTNKLDDFFSEEEEEEELEDDGTGRAPSRKGVEKTVTLADDMDDFIEEDEFSDEDEEARKFRIAEKKRIKEQRLAQPTQITGLSPDKVDEMFEVFGDGHDYDWALELENEEELDRLEESSENEQDENELGIDSKRKKKLTLQDIYDLQDLKKNLLTEEDMNIRKADIPERYQELRTGLKNYGKLSPEDLELEKNWISDKIAVDKNFDADYDTTEFKEAIGNAINFIQQENLEVSFIYAYRRNYISSRSKDGFVLIEDDLWDIVFYDTEFHSIIYKRDYVKTFYEKLDIHDPIVDEYFSNQSMTELNSLQDIYDYVEFKYAQEINDVLLSTQQDATSKKHLKNSSYEKFKASALYQAINDTGITAEQVGENISAEHQLHPVVDHPSLKPTDSVANILEGPEAKDLQIFSQNPKLALETIEKYYALELSKNPKVRQKIRDDFYKYYIVDVALTSKGRKEIQRGSPYEDIKYALGRTPAHFRSEPDVFLRMLEAESLHLMNIQIHVSSQDQYTNHLFQTSLETSNTSEIASEWNSFRRDAFDSALNKVFSDVSQEIKDELKKTCLRLVTKSVRHQFMFKLDQAPFIPNPKDPKIPRVLTITCGQGKFGSDAIIAVYLNRKTEFVRDYKIVENPFDRKEPELFENALDDIIQHCQPNVIGINGPNPSTQRLYKKIQEIVQKKQIVDNRGSHVPVIYVEDEVAVRYQSSERAAQEFPSKPTLVKYCIALGRYIHSPLLEYANLTNEELLSLSIHSHQSLLTRELFLQALETSFVDIVNLVGIEVNKATDNHYYAKALRYIAGFGRRKSADFLESLQRLNEPLLARQQLITHDILTKTIFMNSAAFLYISWNEKNQRYEDLEHDQLDGTRIHPEDYHLATKVAADALEFDPDAIAEKEEQGTMSEFIELLREDPDRRTKLESLNLEAYAEELEKNTGQRKLNNLNTIVLELLEGFEELRNDFHPLHGDEVFKSLTGESEKTFFKGCIIPVRVERFRHNDIYGVTNSGVECVINAQRHIGAQLKRPAEEVYEIGKTYPAKVIYIDYDNISCEVSLLEHDIRRQYVPIHYSKDPSIWNVEQEMKDQEIEKKLALEEARAKRTHRVINHPYYGNFTGPQAEDYLRSRERGDFVIRQSSRGDDHLAITWKLDKDLFQHVDILEKDKENPLALGKTLIVEDQKYHDLDQIIVEYLQNKVRLLNEITSNEKFKKGTKKEVIKFIEDYSKVNPNRSVYYFSFNYEHPGWFYLMFKINAQSQLYVWNVKLTHTGFFLVNYNYPTVIQLCNGFKTLLKSSSRNKTQDNNNNNSGGYYGY.

Residues 1–21 (MSDKEDEKQSQPVLKDDKQDQ) show a composition bias toward basic and acidic residues. Disordered stretches follow at residues 1–214 (MSDK…DEEA) and 268–287 (ELDRLEESSENEQDENELGI). Composition is skewed to acidic residues over residues 36 to 62 (GPSDEEEGDDVFDSSEEDEDLDNDEEE), 71 to 83 (IVDDDEEGGEEDE), 98 to 110 (EENEALDEDDLDL), and 141 to 153 (DDEEESASAEPES). Over residues 154-163 (EVARTNKLDD) the composition is skewed to basic and acidic residues. Acidic residues-rich tracts occupy residues 164 to 177 (FFSEEEEEEELEDD), 196 to 212 (DDMDDFIEEDEFSDEDE), and 268 to 285 (ELDRLEESSENEQDENEL). The 98-residue stretch at 1257–1354 (PYYGNFTGPQ…RLLNEITSNE (98 aa)) folds into the SH2 domain.

It belongs to the SPT6 family.

It localises to the nucleus. It is found in the chromosome. Histone H3-H4 chaperone that plays a role in maintenance of chromatin structure during RNA polymerase II transcription elongation thereby repressing transcription initiation from cryptic promoters. Mediates the reassembly of nucleosomes onto the promoters of at least a selected set of genes during repression; the nucleosome reassembly is essential for transcriptional repression. Essential for viability. This Kluyveromyces lactis (strain ATCC 8585 / CBS 2359 / DSM 70799 / NBRC 1267 / NRRL Y-1140 / WM37) (Yeast) protein is Transcription elongation factor SPT6 (SPT6).